The following is a 248-amino-acid chain: MRSLAILTTLLAGHAFAYPKPAPQSVNRRDWPSINEFLSELAKVMPIGDTITAACDLISDGEDAAASLFGISETENDPCGDVTVLFARGTCDPGNVGVLVGPWFFDSLQTALGSRTLGVKGVPYPASVQDFLSGSVQNGINMANQIKSVLQSCPNTKLVLGGYSQGSMVVHNAASNLDAATMSKISAVVLFGDPYYGKPVANFDAAKTLVVCHDGDNICQGGDIILLPHLTYAEDADTAAAFVVPLVS.

An N-terminal signal peptide occupies residues 1–17 (MRSLAILTTLLAGHAFA). A propeptide spanning residues 18 to 28 (YPKPAPQSVNR) is cleaved from the precursor. Residues 31–70 (WPSINEFLSELAKVMPIGDTITAACDLISDGEDAAASLFG) form a lid covering the active site of the uncomplexed enzyme region. Intrachain disulfides connect C55–C91 and C79–C153. The Nucleophile role is filled by S164. Residues C212 and C219 are joined by a disulfide bond. Residue D216 is part of the active site. H229 acts as the Proton donor/acceptor in catalysis.

It belongs to the cutinase family.

Its subcellular location is the secreted. The enzyme catalyses cutin + H2O = cutin monomers.. Weakly inhibited by n-undecyl phosphonate (C11Y4). Activity unaffected by paraoxon. Functionally, catalyzes the hydrolysis of complex carboxylic polyesters found in the cell wall of plants. Degrades cutin, a macromolecule that forms the structure of the plant cuticle. This chain is Cutinase, found in Hypocrea jecorina (strain QM6a) (Trichoderma reesei).